The following is a 315-amino-acid chain: MTTMQLDSDGRLRHLLTLEGLPRTTLLQLLDRAGQIRDAAVGRVGKRSVLAGTAVCTLFFEPSTRTRSSFHLAAQRLGADVLNFDASTSSTRKGETARDTLKNLEAMGVRGFVVRHPDDGAVEALATAAGEGTALINAGDGRSAHPTQGLLDMLTLRQAKGTDFSKLKVVIVGDVKHSRVARSDLHALRTLGAGEIRVCGPASLLPDDGILEGCVVGQDFDAMLEGADALMMLRLQRERMEEGLVPSLEQYHTEYGLTRERLARAGRDAAVLHPGPINRGVEITDEVADGAQSCVLRQVANGVAVRMAVLETLLG.

Carbamoyl phosphate is bound by residues arginine 65 and threonine 66. Lysine 93 is a binding site for L-aspartate. Carbamoyl phosphate is bound by residues arginine 115, histidine 145, and glutamine 148. L-aspartate contacts are provided by arginine 179 and arginine 234. Residues glycine 275 and proline 276 each contribute to the carbamoyl phosphate site.

The protein belongs to the aspartate/ornithine carbamoyltransferase superfamily. ATCase family. As to quaternary structure, heterododecamer (2C3:3R2) of six catalytic PyrB chains organized as two trimers (C3), and six regulatory PyrI chains organized as three dimers (R2).

It carries out the reaction carbamoyl phosphate + L-aspartate = N-carbamoyl-L-aspartate + phosphate + H(+). It functions in the pathway pyrimidine metabolism; UMP biosynthesis via de novo pathway; (S)-dihydroorotate from bicarbonate: step 2/3. Functionally, catalyzes the condensation of carbamoyl phosphate and aspartate to form carbamoyl aspartate and inorganic phosphate, the committed step in the de novo pyrimidine nucleotide biosynthesis pathway. This is Aspartate carbamoyltransferase catalytic subunit from Xanthomonas euvesicatoria pv. vesicatoria (strain 85-10) (Xanthomonas campestris pv. vesicatoria).